A 533-amino-acid polypeptide reads, in one-letter code: T-complex protein 1 subunit delta (533 aa).

The segment at methionine 1–aspartate 26 is disordered. A compositionally biased stretch (basic and acidic residues) spans serine 16–aspartate 26.

The protein belongs to the TCP-1 chaperonin family. As to quaternary structure, heterooligomeric complex of about 850 to 900 kDa that forms two stacked rings, 12 to 16 nm in diameter.

The protein localises to the cytoplasm. Its function is as follows. Molecular chaperone; assists the folding of proteins upon ATP hydrolysis. Known to play a role, in vitro, in the folding of actin and tubulin. This chain is T-complex protein 1 subunit delta (cct4), found in Dictyostelium discoideum (Social amoeba).